Consider the following 269-residue polypeptide: Putative carbamate hydrolase RutD (269 aa).

Positions 26-144 (VVLLSSGLGG…CFDTRLHLLN (119 aa)) constitute an AB hydrolase-1 domain.

It belongs to the AB hydrolase superfamily. Hydrolase RutD family.

The enzyme catalyses carbamate + 2 H(+) = NH4(+) + CO2. In terms of biological role, involved in pyrimidine catabolism. May facilitate the hydrolysis of carbamate, a reaction that can also occur spontaneously. The polypeptide is Putative carbamate hydrolase RutD (Caulobacter vibrioides (strain ATCC 19089 / CIP 103742 / CB 15) (Caulobacter crescentus)).